The sequence spans 183 residues: Glutathione-regulated potassium-efflux system ancillary protein KefG (183 aa).

It belongs to the NAD(P)H dehydrogenase (quinone) family. KefG subfamily. In terms of assembly, interacts with KefB.

It is found in the cell inner membrane. It catalyses the reaction a quinone + NADH + H(+) = a quinol + NAD(+). The catalysed reaction is a quinone + NADPH + H(+) = a quinol + NADP(+). Functionally, regulatory subunit of a potassium efflux system that confers protection against electrophiles. Required for full activity of KefB. In Escherichia coli O6:K15:H31 (strain 536 / UPEC), this protein is Glutathione-regulated potassium-efflux system ancillary protein KefG.